The sequence spans 153 residues: Flagellar assembly factor FliW (153 aa).

This sequence belongs to the FliW family. As to quaternary structure, interacts with translational regulator CsrA and flagellin(s).

The protein resides in the cytoplasm. Functionally, acts as an anti-CsrA protein, binds CsrA and prevents it from repressing translation of its target genes, one of which is flagellin. Binds to flagellin and participates in the assembly of the flagellum. The sequence is that of Flagellar assembly factor FliW from Leptospira biflexa serovar Patoc (strain Patoc 1 / Ames).